Reading from the N-terminus, the 142-residue chain is MLKLTLTILAAVLLVTPAFGKVYTRCSLAREMHTLGVPKNQLARWTCIAEHESAYNTKAVGSMNSNGSRDYGIFQINNYYWCSPPSGAFSYNECKIKCADFLVDSIEPAVKCAQLVLRQQGWSAWSTWKYCDHTLPSIDDCF.

An N-terminal signal peptide occupies residues 1–20 (MLKLTLTILAAVLLVTPAFG). The 122-residue stretch at 21 to 142 (KVYTRCSLAR…HTLPSIDDCF (122 aa)) folds into the C-type lysozyme domain. 4 disulfides stabilise this stretch: C26–C141, C47–C131, C82–C98, and C94–C112. E52 is an active-site residue. N-linked (GlcNAc...) asparagine glycosylation occurs at N66. Residue D70 is part of the active site.

Belongs to the glycosyl hydrolase 22 family. In terms of tissue distribution, expressed only in the midgut where it is concentrated around the middle in all larval stages.

The protein resides in the secreted. The catalysed reaction is Hydrolysis of (1-&gt;4)-beta-linkages between N-acetylmuramic acid and N-acetyl-D-glucosamine residues in a peptidoglycan and between N-acetyl-D-glucosamine residues in chitodextrins.. In terms of biological role, lysozymes have primarily a bacteriolytic function. Shows antibacterial activity against Gram-positive bacterium M.luteus but shows no activity against Gram-negative bacterium E.coli. Likely to play a role in the eradication of ingested pathogens during their passage through the intestine. The chain is Lysozyme 2 from Lucilia sericata (Green bottle fly).